Reading from the N-terminus, the 288-residue chain is ATP synthase gamma chain (288 aa).

This sequence belongs to the ATPase gamma chain family. As to quaternary structure, F-type ATPases have 2 components, CF(1) - the catalytic core - and CF(0) - the membrane proton channel. CF(1) has five subunits: alpha(3), beta(3), gamma(1), delta(1), epsilon(1). CF(0) has three main subunits: a, b and c.

Its subcellular location is the cell inner membrane. Functionally, produces ATP from ADP in the presence of a proton gradient across the membrane. The gamma chain is believed to be important in regulating ATPase activity and the flow of protons through the CF(0) complex. This Vesicomyosocius okutanii subsp. Calyptogena okutanii (strain HA) protein is ATP synthase gamma chain.